Here is a 181-residue protein sequence, read N- to C-terminus: Ribulose bisphosphate carboxylase small subunit, chloroplastic (181 aa).

The transit peptide at 1–54 directs the protein to the chloroplast; the sequence is MASSMLSSAAVVTSQLQATMVAPFTGLKSSAAFPVTRKTNTDITSIASNGGRVS.

Belongs to the RuBisCO small chain family. In terms of assembly, heterohexadecamer of 8 large and 8 small subunits.

It is found in the plastid. Its subcellular location is the chloroplast. Its function is as follows. RuBisCO catalyzes two reactions: the carboxylation of D-ribulose 1,5-bisphosphate, the primary event in carbon dioxide fixation, as well as the oxidative fragmentation of the pentose substrate. Both reactions occur simultaneously and in competition at the same active site. Although the small subunit is not catalytic it is essential for maximal activity. This chain is Ribulose bisphosphate carboxylase small subunit, chloroplastic, found in Raphanus sativus (Radish).